Reading from the N-terminus, the 664-residue chain is Putative peroxisomal acyl-coenzyme A oxidase 1.2 (664 aa).

399 to 404 (CGGHGY) contacts FAD. Residues 662-664 (AKL) carry the Microbody targeting signal motif.

Belongs to the acyl-CoA oxidase family. FAD serves as cofactor.

Its subcellular location is the peroxisome. The enzyme catalyses a 2,3-saturated acyl-CoA + O2 = a (2E)-enoyl-CoA + H2O2. Catalyzes the desaturation of acyl-CoAs to 2-trans-enoyl-CoAs. The chain is Putative peroxisomal acyl-coenzyme A oxidase 1.2 (ACX1.2) from Arabidopsis thaliana (Mouse-ear cress).